A 419-amino-acid chain; its full sequence is S-adenosylmethionine synthase (419 aa).

Histidine 14 is a binding site for ATP. Residue aspartate 16 participates in Mg(2+) binding. Glutamate 42 provides a ligand contact to K(+). Glutamate 55 and glutamine 98 together coordinate L-methionine. Residues 98 to 108 (QSQDIYQGVDR) are flexible loop. Residues 164 to 166 (DSK), 242 to 243 (KF), aspartate 251, 257 to 258 (RK), alanine 274, and lysine 278 contribute to the ATP site. Residue aspartate 251 participates in L-methionine binding. Lysine 282 serves as a coordination point for L-methionine.

The protein belongs to the AdoMet synthase family. As to quaternary structure, homotetramer; dimer of dimers. Requires Mg(2+) as cofactor. K(+) is required as a cofactor.

The protein localises to the cytoplasm. The catalysed reaction is L-methionine + ATP + H2O = S-adenosyl-L-methionine + phosphate + diphosphate. It functions in the pathway amino-acid biosynthesis; S-adenosyl-L-methionine biosynthesis; S-adenosyl-L-methionine from L-methionine: step 1/1. Its function is as follows. Catalyzes the formation of S-adenosylmethionine (AdoMet) from methionine and ATP. The overall synthetic reaction is composed of two sequential steps, AdoMet formation and the subsequent tripolyphosphate hydrolysis which occurs prior to release of AdoMet from the enzyme. The polypeptide is S-adenosylmethionine synthase (Christiangramia forsetii (strain DSM 17595 / CGMCC 1.15422 / KT0803) (Gramella forsetii)).